The chain runs to 74 residues: Transcription attenuation protein MtrB (74 aa).

It belongs to the MtrB family. In terms of assembly, oligomer of 11 identical subunits arranged in doughnut-like structure.

In terms of biological role, required for transcription attenuation control in the Trp operon. This trans-acting factor seems to recognize a 10 bases nucleotide sequence in the Trp leader transcript causing transcription termination. Binds the leader RNA only in presence of L-tryptophan. The sequence is that of Transcription attenuation protein MtrB from Geobacillus sp. (strain WCH70).